A 71-amino-acid chain; its full sequence is Large ribosomal subunit protein uL29 (71 aa).

Belongs to the universal ribosomal protein uL29 family.

The chain is Large ribosomal subunit protein uL29 from Rickettsia africae (strain ESF-5).